A 279-amino-acid polypeptide reads, in one-letter code: Sulfur carrier protein FdhD (279 aa).

The Cysteine persulfide intermediate role is filled by Cys-122.

This sequence belongs to the FdhD family.

Its subcellular location is the cytoplasm. In terms of biological role, required for formate dehydrogenase (FDH) activity. Acts as a sulfur carrier protein that transfers sulfur from IscS to the molybdenum cofactor prior to its insertion into FDH. This is Sulfur carrier protein FdhD from Thermoplasma volcanium (strain ATCC 51530 / DSM 4299 / JCM 9571 / NBRC 15438 / GSS1).